A 601-amino-acid polypeptide reads, in one-letter code: Elongation factor 4 (601 aa).

Positions 5–188 constitute a tr-type G domain; sequence SHIRNFAIIA…ALVLRLPPPT (184 aa). GTP is bound by residues 17–22 and 135–138; these read DHGKST and NKID.

The protein belongs to the TRAFAC class translation factor GTPase superfamily. Classic translation factor GTPase family. LepA subfamily.

It is found in the cell inner membrane. It catalyses the reaction GTP + H2O = GDP + phosphate + H(+). Its function is as follows. Required for accurate and efficient protein synthesis under certain stress conditions. May act as a fidelity factor of the translation reaction, by catalyzing a one-codon backward translocation of tRNAs on improperly translocated ribosomes. Back-translocation proceeds from a post-translocation (POST) complex to a pre-translocation (PRE) complex, thus giving elongation factor G a second chance to translocate the tRNAs correctly. Binds to ribosomes in a GTP-dependent manner. This chain is Elongation factor 4, found in Rhodospirillum rubrum (strain ATCC 11170 / ATH 1.1.1 / DSM 467 / LMG 4362 / NCIMB 8255 / S1).